A 63-amino-acid chain; its full sequence is Large ribosomal subunit protein bL28 (63 aa).

It belongs to the bacterial ribosomal protein bL28 family.

In Geobacter metallireducens (strain ATCC 53774 / DSM 7210 / GS-15), this protein is Large ribosomal subunit protein bL28.